The sequence spans 700 residues: Calpain-2 catalytic subunit (700 aa).

Positions 2-19 are cleaved as a propeptide — anchors to the small subunit; sequence AGMAAALAKERAAAAGAG. Residues 45–344 form the Calpain catalytic domain; the sequence is LFHDPSFPAG…YSRLEICNLT (300 aa). Residues Gly91 and Asp96 each contribute to the Ca(2+) site. Residue Cys105 is part of the active site. Ca(2+) is bound by residues Glu175, Gln229, and Lys230. Catalysis depends on residues His262 and Asn286. Residues Glu292, Asp299, and Glu323 each contribute to the Ca(2+) site. The segment at 345–514 is domain III; the sequence is PDTLASDRYK…KNANSTVIDD (170 aa). The tract at residues 515–529 is linker; it reads EIEANFEETEIDEDD. A domain IV region spans residues 530–700; sequence IEPSFKKLFG…LINWLFFTVI (171 aa). The Ca(2+) site is built by Ala542, Asp545, Glu547, Glu552, Asp585, Asp587, Ser589, Lys591, Glu596, Asp615, Asp617, Ser619, Thr621, Glu626, Asp658, and Asn661. EF-hand domains are found at residues 572–605 and 602–637; these read FSIE…TKIQ and TKIQ…AGFK. In terms of domain architecture, EF-hand 3 spans 667-700; that stretch reads IRLETLYKMFRKLDTEKTGTIELNLINWLFFTVI.

It belongs to the peptidase C2 family. In terms of assembly, forms a heterodimer with a small (regulatory) subunit (CAPNS1). Ca(2+) serves as cofactor. In terms of tissue distribution, ubiquitous.

It is found in the cytoplasm. The protein resides in the cell membrane. The enzyme catalyses Broad endopeptidase specificity.. Activated by 200-1000 micromolar concentrations of calcium and inhibited by calpastatin. In terms of biological role, calcium-regulated non-lysosomal thiol-protease which catalyze limited proteolysis of substrates involved in cytoskeletal remodeling and signal transduction. This is Calpain-2 catalytic subunit (CAPN2) from Gallus gallus (Chicken).